Reading from the N-terminus, the 548-residue chain is Glutamate--tRNA ligase (548 aa).

The short motif at 102–112 is the 'HIGH' region element; that stretch reads PSPSGPLHIGH.

This sequence belongs to the class-I aminoacyl-tRNA synthetase family. Glutamate--tRNA ligase type 2 subfamily.

The protein localises to the cytoplasm. The enzyme catalyses tRNA(Glu) + L-glutamate + ATP = L-glutamyl-tRNA(Glu) + AMP + diphosphate. Functionally, catalyzes the attachment of glutamate to tRNA(Glu) in a two-step reaction: glutamate is first activated by ATP to form Glu-AMP and then transferred to the acceptor end of tRNA(Glu). This is Glutamate--tRNA ligase from Thermoplasma volcanium (strain ATCC 51530 / DSM 4299 / JCM 9571 / NBRC 15438 / GSS1).